Reading from the N-terminus, the 1028-residue chain is MESALTARDRVGVQDFVLLENFTSEAAFIENLRKRFKENLIYTYIGSVLVSVNPYKELEIYSKQNMERYRGVSFYEVSPHLYAIADNSYRSLRTERKDQCILISGESGAGKTEATKKILQYYAVTCPASQQVETVKDRLLQSNPVLEAFGNTKTLRNDNSSRFGKYMDVQFDYRGAPVGGHILNYLLEKSRVVHQNHGERNFHIFYQLLEGGEEDLLRRLGLEKNPQQYHYLVKGHCARVSSINDKNDWKVVRRALSIISFNDNEVEDLLSIVASVLHLGNVQFAADEQGNAQVTTENQIKYLARLLAVEGSVLRDALIHKKIIAKGEELISPLNLEQAAYARDALAKAIYGRTFSWLVNKVNKSLAYKEGEFPGWRSTTVLGLLDIYGFEVFQHNSFEQFCINYCNEKLQQLFIELTLKSEQEEYESEGIAWEPVQYFNNKIICDLVEEKFKGIISILDEECLRPGDATDTTFLEKLEETVKNHPHFLTHKLADQKTRKSLGREEFRLLHYAGEVTYSVAGFLDKNNDLLFRNLKETMCNSENPIINQCFDRTELTDKKRPETAATQFKNSLSKLMEILMSKEPSYIRCIKPNDAKQADRFDEVLIRHQVKYLGLMENLRVRRAGFAYRRKYEVFLQRYKSLCPETWPTWDGRPHDGVAVLVKHLGYKQEEYKMGRTKIFIRFPKTLFATEDALEVRKQSLATKMQATWRGFYRRKKFLHMKHSAIAIQSWWRGTLGRRKAAKRKWAVQTIRRFIKGFIYRNHPRCPENEYFLDYIRFSFLMNLKRNLPKNVLDKSWPTPPPSLCEASQLLRQLCMQNMVWTYCKRISPEWKQQLEQKVIASEIFKGKKDNYPQSVPRLFINTRLGNEEINAKVLQALENEAIKYAVPVIKYDRKGYKARSRQLLLTQNAVIIVEDSKIKQRIDYANLTGISVSSLSDNLFVLHVHCEDNKQKGDVVLQSDHVIETLTKTAMRADKVNNININQGSIKFTVGQGKEGIIDFISGSELLIAKAKNGHLTVVAPRLNSR.

M1 carries the post-translational modification N-acetylmethionine. Residues 12–696 enclose the Myosin motor domain; sequence GVQDFVLLEN…TLFATEDALE (685 aa). Residues N53, Y61, 104–113, and 157–161 each bind ATP; these read SGESGAGKTE and NDNSS. N6-methyllysine is present on K348. Positions 573 to 595 are actin-binding; the sequence is LSKLMEILMSKEPSYIRCIKPND. IQ domains lie at 699-728 and 722-751; these read KQSL…SAIA and MKHS…AVQT. Positions 850-1024 constitute a TH1 domain; it reads KDNYPQSVPR…NGHLTVVAPR (175 aa).

It belongs to the TRAFAC class myosin-kinesin ATPase superfamily. Myosin family. As to quaternary structure, interacts (via its IQ motifs) with CALM.

The protein resides in the cytoplasm. It is found in the cell cortex. It localises to the cell projection. The protein localises to the ruffle membrane. Its subcellular location is the cytoplasmic vesicle. The protein resides in the stereocilium membrane. Myosins are actin-based motor molecules with ATPase activity. Unconventional myosins serve in intracellular movements. Their highly divergent tails are presumed to bind to membranous compartments, which would be moved relative to actin filaments. This chain is Unconventional myosin-Ic (MYO1C), found in Gallus gallus (Chicken).